The following is a 222-amino-acid chain: V-type ATP synthase subunit D (222 aa).

The protein belongs to the V-ATPase D subunit family.

In terms of biological role, produces ATP from ADP in the presence of a proton gradient across the membrane. In Acetivibrio thermocellus (strain ATCC 27405 / DSM 1237 / JCM 9322 / NBRC 103400 / NCIMB 10682 / NRRL B-4536 / VPI 7372) (Clostridium thermocellum), this protein is V-type ATP synthase subunit D.